The sequence spans 539 residues: Tyrosine-protein kinase csk-1 (539 aa).

One can recognise an SH3 domain in the interval 43–110 (SPGNDVIVTR…HADCVVRING (68 aa)). A disordered region spans residues 129–148 (PGAASTTSSTSSHHSTAANH). Over residues 131-146 (AASTTSSTSSHHSTAA) the composition is skewed to low complexity. Residues 151–241 (WFHSMISREN…GLCHRLVTPI (91 aa)) form the SH2 domain. Positions 283–535 (IDVGDTIGHG…GQVLQRLTTI (253 aa)) constitute a Protein kinase domain. Residues 289–297 (IGHGEFGDV) and lysine 310 each bind ATP. Aspartate 403 (proton acceptor) is an active-site residue.

The protein belongs to the protein kinase superfamily. Tyr protein kinase family. CSK subfamily. It depends on Mg(2+) as a cofactor. The cofactor is Mn(2+). In terms of tissue distribution, expressed predominantly in pharyngeal muscles in procorpus, metacorpus and terminal bulb. Expressed also in some neurons (ASE, ADF, AVA, AUA, RMDV and BAG) in the head region, anchor cell, vulva, cells around anus, body wall muscle and gondal distal tip cells.

The enzyme catalyses L-tyrosyl-[protein] + ATP = O-phospho-L-tyrosyl-[protein] + ADP + H(+). Non-receptor tyrosine-protein kinase which plays a role in pharynx function by regulating pumping and the orientation of pharyngeal muscle fibers, independently of src-1 and src-2. May phosphorylate and thereby negatively regulate src-1 and src-2 activities. This is Tyrosine-protein kinase csk-1 from Caenorhabditis elegans.